A 128-amino-acid polypeptide reads, in one-letter code: Fluoride-specific ion channel FluC (128 aa).

The next 4 membrane-spanning stretches (helical) occupy residues 3-23 (FTTIFYIGFGGALGAILRSFT), 34-54 (LSFPLGTLSVNIIGGFFIGFL), 65-85 (INLKSFLVTGFLGGLTTFSTF), and 102-122 (FLNIASNLLLSLLFCYFGFWI). Positions 77 and 80 each coordinate Na(+).

Belongs to the fluoride channel Fluc/FEX (TC 1.A.43) family.

Its subcellular location is the cell inner membrane. The enzyme catalyses fluoride(in) = fluoride(out). Na(+) is not transported, but it plays an essential structural role and its presence is essential for fluoride channel function. Functionally, fluoride-specific ion channel. Important for reducing fluoride concentration in the cell, thus reducing its toxicity. This Campylobacter fetus subsp. fetus (strain 82-40) protein is Fluoride-specific ion channel FluC.